A 168-amino-acid polypeptide reads, in one-letter code: Large ribosomal subunit protein bL17 (168 aa).

Residues 124–168 form a disordered region; the sequence is QATGEAEAATKRAAKDAEGSAEVSEAKVDTTKADDEAAAEESKDA. The segment covering 131–168 has biased composition (basic and acidic residues); sequence AATKRAAKDAEGSAEVSEAKVDTTKADDEAAAEESKDA.

It belongs to the bacterial ribosomal protein bL17 family. In terms of assembly, part of the 50S ribosomal subunit. Contacts protein L32.

This is Large ribosomal subunit protein bL17 from Streptomyces coelicolor (strain ATCC BAA-471 / A3(2) / M145).